The chain runs to 198 residues: Prostamide/prostaglandin F synthase (198 aa).

Residue Y108 is modified to Phosphotyrosine.

This sequence belongs to the peroxiredoxin-like PRXL2 family. Prostamide/prostaglandin F synthase subfamily.

Its subcellular location is the cytoplasm. The protein resides in the cytosol. It catalyses the reaction prostaglandin H2 + [thioredoxin]-dithiol = prostaglandin F2alpha + [thioredoxin]-disulfide. The catalysed reaction is prostamide F2alpha + [thioredoxin]-disulfide = prostamide H2 + [thioredoxin]-dithiol. Its function is as follows. Catalyzes the reduction of prostaglandin-ethanolamide H(2) (prostamide H(2)) to prostamide F(2alpha) with NADPH as proton donor. Also able to reduce prostaglandin H(2) to prostaglandin F(2alpha). The polypeptide is Prostamide/prostaglandin F synthase (PRXL2B) (Pongo abelii (Sumatran orangutan)).